Consider the following 120-residue polypeptide: uncharacterized protein (120 aa).

Residues 79-120 are disordered; it reads TGNEIPPEPEQEVVASPVTEQKKAEPSAPPKGSKKKKRGKKK. Residues 110 to 120 show a composition bias toward basic residues; it reads GSKKKKRGKKK.

This is an uncharacterized protein from Schizosaccharomyces pombe (strain 972 / ATCC 24843) (Fission yeast).